A 347-amino-acid polypeptide reads, in one-letter code: S-adenosylmethionine:tRNA ribosyltransferase-isomerase (347 aa).

This sequence belongs to the QueA family. In terms of assembly, monomer.

The protein localises to the cytoplasm. The enzyme catalyses 7-aminomethyl-7-carbaguanosine(34) in tRNA + S-adenosyl-L-methionine = epoxyqueuosine(34) in tRNA + adenine + L-methionine + 2 H(+). Its pathway is tRNA modification; tRNA-queuosine biosynthesis. In terms of biological role, transfers and isomerizes the ribose moiety from AdoMet to the 7-aminomethyl group of 7-deazaguanine (preQ1-tRNA) to give epoxyqueuosine (oQ-tRNA). The polypeptide is S-adenosylmethionine:tRNA ribosyltransferase-isomerase (Xylella fastidiosa (strain 9a5c)).